A 173-amino-acid chain; its full sequence is Alpha-crystallin A chain (173 aa).

Residue methionine 1 is modified to N-acetylmethionine. Positions 1 to 63 (MDIAIQHPWF…RTVLDSGISE (63 aa)) are required for complex formation with BFSP1 and BFSP2. Glutamine 6 bears the Deamidated glutamine; partial mark. Serine 45 is subject to Phosphoserine. Deamidated glutamine; partial is present on glutamine 50. Positions 52–162 (LFRTVLDSGI…GHSERAIPVS (111 aa)) constitute a sHSP domain. Residues lysine 70 and lysine 99 each carry the N6-acetyllysine modification. Histidine 100 contributes to the Zn(2+) binding site. The residue at position 101 (asparagine 101) is a Deamidated asparagine; partial. Positions 102 and 107 each coordinate Zn(2+). The residue at position 122 (serine 122) is a Phosphoserine. Asparagine 123 carries the deamidated asparagine; partial modification. Residues 144-173 (PKVPSGMDAGHSERAIPVSREEKPSSAPSS) form a disordered region. A compositionally biased stretch (basic and acidic residues) spans 153-167 (GHSERAIPVSREEKP). Histidine 154 provides a ligand contact to Zn(2+). An O-linked (GlcNAc) serine glycan is attached at serine 162.

The protein belongs to the small heat shock protein (HSP20) family. Heteromer composed of three CRYAA and one CRYAB subunits. Inter-subunit bridging via zinc ions enhances stability, which is crucial as there is no protein turn over in the lens. Can also form homodimers and homotetramers (dimers of dimers) which serve as the building blocks of homooligomers. Within homooligomers, the zinc-binding motif is created from residues of 3 different molecules. His-100 and Glu-102 from one molecule are ligands of the zinc ion, and His-107 and His-154 residues from additional molecules complete the site with tetrahedral coordination geometry. Part of a complex required for lens intermediate filament formation composed of BFSP1, BFSP2 and CRYAA. Post-translationally, acetylation at Lys-70 may increase chaperone activity. In terms of processing, undergoes age-dependent proteolytical cleavage at the C-terminus.

It localises to the cytoplasm. The protein resides in the nucleus. In terms of biological role, contributes to the transparency and refractive index of the lens. Acts as a chaperone, preventing aggregation of various proteins under a wide range of stress conditions. Required for the correct formation of lens intermediate filaments as part of a complex composed of BFSP1, BFSP2 and CRYAA. The polypeptide is Alpha-crystallin A chain (CRYAA) (Melursus ursinus (Sloth bear)).